The following is a 65-amino-acid chain: Large ribosomal subunit protein bL33c (65 aa).

It belongs to the bacterial ribosomal protein bL33 family.

It is found in the plastid. The protein resides in the chloroplast. The protein is Large ribosomal subunit protein bL33c of Zygnema circumcarinatum (Green alga).